Reading from the N-terminus, the 976-residue chain is Terminal uridylyltransferase 1 (976 aa).

2 disordered regions span residues 1–47 and 129–185; these read MVSK…DADF and TGRS…TTEG. Positions 1-188 are required for oligomerization and may contribute to the incorporation into the MPsome complex; it reads MVSKYHRLLQ…EDDTTEGPRG (188 aa). Positions 147–183 are enriched in acidic residues; it reads ADDESDGNLDTDGSDASEGDEVESTTDADVYGEDDTT. The segment at 190-221 adopts a C2H2-type; atypical zinc-finger fold; it reads VRLYSCDACPHAVFTTHAALLAHAEEHHADLL. Residues C195, C198, H212, and H217 each coordinate Zn(2+). Residues S298 and 309 to 312 each bind UTP; that span reads ADID. Residues D310 and D312 each contribute to the Mg(2+) site. An RNA-binding site is contributed by R358. The PAP-associated domain occupies 366–425; it reads ASSPILTVARRDAEDVVARSIRFILNGPATREDRLLLEGSVRDAVGPTGVQQVWWNRTSD. UTP contacts are provided by residues 480–484, K505, K509, and 523–524; these read GIRNS and SY. A Nucleotide recognition motif (NRM) motif is present at residues 652–661; it reads IEDPYEENLN. The tract at residues 700–976 is important for catalytic activity and RNA binding; it reads DSSGTPAAGG…SKVTPFKSPR (277 aa). The tract at residues 732–755 is disordered; it reads SESRRLPQSNSDNSGRIANGDNES.

Belongs to the DNA polymerase type-B-like family. Oligomer. Component of the mitochondrial 3' processome (MPsome) complex composed at least of terminal uridylyltransferase KRET1/TUT1, 3'-5' exonuclease DSS1, MPSS1, MPSS2 and MPSS3. Within the complex, interacts with DSS1, MPSS1 and MPSS3. Mg(2+) is required as a cofactor. The cofactor is Mn(2+).

Its subcellular location is the mitochondrion. The catalysed reaction is RNA(n) + UTP = RNA(n)-3'-uridine ribonucleotide + diphosphate. Its function is as follows. Terminal uridylyltransferase which is involved in the post-transcriptional editing of mitochondrial RNA, a process involving the addition and deletion of uridine (U) nucleotides in the pre-RNA. Specifically, catalyzes the addition of Us to the 3'-hydroxyl group of guided RNA (gRNA), ribosomal RNA (rRNA) and some mRNAs. As part of the mitochondrial 3' processome (MPsome), catalyzes the primary 3' uridylation of gRNA precursors to facilitate their recognition and to induce their processive 3'-5' degradation by DSS1, and the secondary 3' uridylation of mature gRNAs. Involved in the 3' uridylylation of the long A/U tail of some edited and never-edited mRNAs. Promotes 3' uridylylation-mediated decay of some never-edited mRNAs. Does not mediate RNA-independent UTP polymerization. The sequence is that of Terminal uridylyltransferase 1 from Trypanosoma brucei brucei.